Reading from the N-terminus, the 311-residue chain is Olfactory receptor 5L1 (311 aa).

Residues 1 to 25 (MGKENCTTVAEFILLGLSDVPELRV) are Extracellular-facing. Residue N5 is glycosylated (N-linked (GlcNAc...) asparagine). The helical transmembrane segment at 26-46 (CLFLLFLLIYGVTLLANLGMI) threads the bilayer. Residues 47 to 54 (ALIQVSSR) are Cytoplasmic-facing. The helical transmembrane segment at 55–75 (LHTPMYFFLSHLSSVDFCYSS) threads the bilayer. Topologically, residues 76–99 (IIVPKMLANIFNKDKAISFLGCMV) are extracellular. Residues C97 and C189 are joined by a disulfide bond. A helical transmembrane segment spans residues 100–120 (QFYLFCTCVVTEVFLLAVMAY). Residues 121–139 (DRFVAICNPLLYTVTMSWK) lie on the Cytoplasmic side of the membrane. Residues 140 to 160 (VRVELASCCYFCGTVCSLIHL) traverse the membrane as a helical segment. Topologically, residues 161-196 (CLALRIPFYRSNVINHFFCDLPPVLSLACSDITVNE) are extracellular. Residue N195 is glycosylated (N-linked (GlcNAc...) asparagine). A helical membrane pass occupies residues 197–217 (TLLFLVATLNESVTIMIILTS). Residues 218–237 (YLLILTTILKMGSAEGRHKA) are Cytoplasmic-facing. A helical transmembrane segment spans residues 238-258 (FSTCASHLTAITVFHGTVLSI). Residues 259–271 (YCRPSSGNSGDAD) lie on the Extracellular side of the membrane. Residues 272–292 (KVATVFYTVVIPMLNSVIYSL) traverse the membrane as a helical segment. Topologically, residues 293-311 (RNKDVKEALRKVMGSKIHS) are cytoplasmic.

Belongs to the G-protein coupled receptor 1 family.

It localises to the cell membrane. In terms of biological role, odorant receptor. This chain is Olfactory receptor 5L1 (OR5L1), found in Homo sapiens (Human).